The primary structure comprises 258 residues: UPF0246 protein YaaA (258 aa).

Belongs to the UPF0246 family.

This chain is UPF0246 protein YaaA, found in Escherichia coli O7:K1 (strain IAI39 / ExPEC).